We begin with the raw amino-acid sequence, 523 residues long: Histidine ammonia-lyase (523 aa).

Positions 148–150 form a cross-link, 5-imidazolinone (Ala-Gly); that stretch reads ASG. A 2,3-didehydroalanine (Ser) modification is found at S149.

This sequence belongs to the PAL/histidase family. Post-translationally, contains an active site 4-methylidene-imidazol-5-one (MIO), which is formed autocatalytically by cyclization and dehydration of residues Ala-Ser-Gly.

The protein localises to the cytoplasm. It carries out the reaction L-histidine = trans-urocanate + NH4(+). The protein operates within amino-acid degradation; L-histidine degradation into L-glutamate; N-formimidoyl-L-glutamate from L-histidine: step 1/3. The protein is Histidine ammonia-lyase of Chloroflexus aurantiacus (strain ATCC 29366 / DSM 635 / J-10-fl).